A 316-amino-acid chain; its full sequence is Pantothenate kinase (316 aa).

Position 95-102 (G95–S102) interacts with ATP.

This sequence belongs to the prokaryotic pantothenate kinase family.

Its subcellular location is the cytoplasm. It carries out the reaction (R)-pantothenate + ATP = (R)-4'-phosphopantothenate + ADP + H(+). The protein operates within cofactor biosynthesis; coenzyme A biosynthesis; CoA from (R)-pantothenate: step 1/5. This Halalkalibacterium halodurans (strain ATCC BAA-125 / DSM 18197 / FERM 7344 / JCM 9153 / C-125) (Bacillus halodurans) protein is Pantothenate kinase (coaA).